Here is a 721-residue protein sequence, read N- to C-terminus: Long-chain-fatty-acid--CoA ligase ACSBG1 (721 aa).

Residues M1–E64 are disordered. Residues Q26 to E52 show a composition bias toward polar residues. Residues S34, S50, S53, and S70 each carry the phosphoserine modification. ATP contacts are provided by residues T279 to K287, A469 to S474, D547, and R562. Y655 is subject to Phosphotyrosine. ATP is bound at residue K698.

The protein belongs to the ATP-dependent AMP-binding enzyme family. Bubblegum subfamily. Mainly expressed in brain. Also expressed in adrenal gland and testis. In brain, it is present in cerebral cortical and cerebellar neurons and in steroidogenic cells of the adrenal gland, testis and ovary (at protein level).

It localises to the cytoplasm. Its subcellular location is the cytoplasmic vesicle. The protein localises to the microsome. It is found in the endoplasmic reticulum. The protein resides in the cell membrane. It carries out the reaction a long-chain fatty acid + ATP + CoA = a long-chain fatty acyl-CoA + AMP + diphosphate. The catalysed reaction is (E)-hexadec-2-enoate + ATP + CoA = (2E)-hexadecenoyl-CoA + AMP + diphosphate. It catalyses the reaction hexadecanoate + ATP + CoA = hexadecanoyl-CoA + AMP + diphosphate. In terms of biological role, catalyzes the conversion of fatty acids such as long-chain and very long-chain fatty acids to their active form acyl-CoAs for both synthesis of cellular lipids, and degradation via beta-oxidation. Can activate diverse saturated, monosaturated and polyunsaturated fatty acids. In Mus musculus (Mouse), this protein is Long-chain-fatty-acid--CoA ligase ACSBG1.